The primary structure comprises 305 residues: Glycine--tRNA ligase alpha subunit (305 aa).

It belongs to the class-II aminoacyl-tRNA synthetase family. In terms of assembly, tetramer of two alpha and two beta subunits.

The protein resides in the cytoplasm. It catalyses the reaction tRNA(Gly) + glycine + ATP = glycyl-tRNA(Gly) + AMP + diphosphate. This Streptococcus pyogenes serotype M18 (strain MGAS8232) protein is Glycine--tRNA ligase alpha subunit.